A 430-amino-acid polypeptide reads, in one-letter code: Enolase (430 aa).

Gln-164 is a (2R)-2-phosphoglycerate binding site. Glu-208 (proton donor) is an active-site residue. 3 residues coordinate Mg(2+): Asp-245, Glu-288, and Asp-315. 4 residues coordinate (2R)-2-phosphoglycerate: Lys-340, Arg-369, Ser-370, and Lys-391. The Proton acceptor role is filled by Lys-340.

Belongs to the enolase family. Mg(2+) serves as cofactor.

The protein resides in the cytoplasm. Its subcellular location is the secreted. It localises to the cell surface. It catalyses the reaction (2R)-2-phosphoglycerate = phosphoenolpyruvate + H2O. Its pathway is carbohydrate degradation; glycolysis; pyruvate from D-glyceraldehyde 3-phosphate: step 4/5. Functionally, catalyzes the reversible conversion of 2-phosphoglycerate (2-PG) into phosphoenolpyruvate (PEP). It is essential for the degradation of carbohydrates via glycolysis. The sequence is that of Enolase from Thermococcus gammatolerans (strain DSM 15229 / JCM 11827 / EJ3).